We begin with the raw amino-acid sequence, 805 residues long: Ubiquitin carboxyl-terminal hydrolase 10 (805 aa).

The segment at 139–170 (DGSGNADSDGTSGTGQRERKKKKKRPPGYYSY) is disordered. The span at 143–153 (NADSDGTSGTG) shows a compositional bias: polar residues. Positions 422 to 802 (RGLINKGNWC…TAYLLYYRRV (381 aa)) constitute a USP domain. Cysteine 431 functions as the Nucleophile in the catalytic mechanism. Residues 561 to 593 (HINNGPDPVSEKEEINKDEQEGSDEEWEQVGPR) form a disordered region. The span at 569–580 (VSEKEEINKDEQ) shows a compositional bias: basic and acidic residues. The active-site Proton acceptor is histidine 756.

The protein belongs to the peptidase C19 family. USP10 subfamily.

The protein localises to the cytoplasm. Its subcellular location is the nucleus. It carries out the reaction Thiol-dependent hydrolysis of ester, thioester, amide, peptide and isopeptide bonds formed by the C-terminal Gly of ubiquitin (a 76-residue protein attached to proteins as an intracellular targeting signal).. Functionally, hydrolase that can remove conjugated ubiquitin from target proteins such as p53/tp53, rps2/us5, rps3/us3, rps10/eS10, becn1, snx3 and cftr. Acts as an essential regulator of p53/tp53 stability: in unstressed cells, specifically deubiquitinates p53/tp53 in the cytoplasm, leading to counteracts MDM2 action and stabilize p53/tp53. Following DNA damage, translocates to the nucleus and deubiquitinates p53/tp53, leading to regulate the p53/TP53-dependent DNA damage response. Component of a regulatory loop that controls autophagy and p53/tp53 levels. Plays a key role in 40S ribosome subunit recycling when a ribosome has stalled during translation: acts both by inhibiting formation of stress granules, which store stalled translation pre-initiation complexes, and mediating deubiquitination of 40S ribosome subunits. Deubiquitinates cftr in early endosomes, enhancing its endocytic recycling. The sequence is that of Ubiquitin carboxyl-terminal hydrolase 10 (usp10) from Xenopus tropicalis (Western clawed frog).